A 208-amino-acid polypeptide reads, in one-letter code: UPF0637 protein BCQ_3749 (208 aa).

Belongs to the UPF0637 family.

The protein is UPF0637 protein BCQ_3749 of Bacillus cereus (strain Q1).